A 459-amino-acid polypeptide reads, in one-letter code: Cysteine--tRNA ligase (459 aa).

Cys-28 provides a ligand contact to Zn(2+). Residues 30 to 40 (VTIYDLCHIGH) carry the 'HIGH' region motif. Zn(2+) is bound by residues Cys-209, His-234, and Glu-238. The 'KMSKS' region signature appears at 266 to 270 (KMSKS). Lys-269 serves as a coordination point for ATP.

The protein belongs to the class-I aminoacyl-tRNA synthetase family. As to quaternary structure, monomer. Zn(2+) serves as cofactor.

Its subcellular location is the cytoplasm. It catalyses the reaction tRNA(Cys) + L-cysteine + ATP = L-cysteinyl-tRNA(Cys) + AMP + diphosphate. The polypeptide is Cysteine--tRNA ligase (Shewanella amazonensis (strain ATCC BAA-1098 / SB2B)).